The following is a 95-amino-acid chain: Large ribosomal subunit protein bL25 (95 aa).

Belongs to the bacterial ribosomal protein bL25 family. As to quaternary structure, part of the 50S ribosomal subunit; part of the 5S rRNA/L5/L18/L25 subcomplex. Contacts the 5S rRNA. Binds to the 5S rRNA independently of L5 and L18.

This is one of the proteins that binds to the 5S RNA in the ribosome where it forms part of the central protuberance. The protein is Large ribosomal subunit protein bL25 of Glaesserella parasuis serovar 5 (strain SH0165) (Haemophilus parasuis).